The following is a 410-amino-acid chain: Testis-specific Y-encoded-like protein 6 (410 aa).

Disordered stretches follow at residues 1 to 31 (MSLP…EKSK) and 46 to 69 (PIVF…DGGH). Serine 9 is modified (phosphoserine). Positions 18-31 (EDPHQGQRSREKSK) are enriched in basic and acidic residues.

The protein belongs to the nucleosome assembly protein (NAP) family.

This chain is Testis-specific Y-encoded-like protein 6 (TSPYL6), found in Homo sapiens (Human).